A 74-amino-acid polypeptide reads, in one-letter code: Putative defensin-like protein 186 (74 aa).

A signal peptide spans 1-22 (MKNSSIILVLVFFFFISSSGEA). 4 cysteine pairs are disulfide-bonded: C25–C74, C31–C51, C37–C68, and C41–C70.

Belongs to the DEFL family.

The protein resides in the secreted. This Arabidopsis thaliana (Mouse-ear cress) protein is Putative defensin-like protein 186 (LCR40).